The sequence spans 506 residues: Ribose import ATP-binding protein RbsA 2 (506 aa).

ABC transporter domains are found at residues 7 to 242 and 250 to 497; these read LEMR…VGRP and ERDI…TGVN. 39–46 provides a ligand contact to ATP; it reads GENGAGKS.

It belongs to the ABC transporter superfamily. Ribose importer (TC 3.A.1.2.1) family. In terms of assembly, the complex is composed of an ATP-binding protein (RbsA), two transmembrane proteins (RbsC) and a solute-binding protein (RbsB).

It localises to the cell inner membrane. The enzyme catalyses D-ribose(out) + ATP + H2O = D-ribose(in) + ADP + phosphate + H(+). Its function is as follows. Part of the ABC transporter complex RbsABC involved in ribose import. Responsible for energy coupling to the transport system. In Escherichia coli O157:H7, this protein is Ribose import ATP-binding protein RbsA 2.